The following is a 397-amino-acid chain: Phosphoglycerate kinase (397 aa).

Substrate-binding positions include 26–28 (DLN), Arg42, 65–68 (HLGR), Arg119, and Arg152. Residues Lys203, Glu325, and 351–354 (GGDT) contribute to the ATP site.

It belongs to the phosphoglycerate kinase family. Monomer.

It localises to the cytoplasm. It catalyses the reaction (2R)-3-phosphoglycerate + ATP = (2R)-3-phospho-glyceroyl phosphate + ADP. Its pathway is carbohydrate degradation; glycolysis; pyruvate from D-glyceraldehyde 3-phosphate: step 2/5. This is Phosphoglycerate kinase from Bordetella bronchiseptica (strain ATCC BAA-588 / NCTC 13252 / RB50) (Alcaligenes bronchisepticus).